The sequence spans 176 residues: Prenylated Rab acceptor 1 (176 aa).

Met-1 is subject to N-acetylmethionine. An SKL peroxisome targeting motif motif is present at residues 11 to 13; the sequence is SRF. Ser-18 carries the post-translational modification Phosphoserine. 2 helical membrane passes run 84-104 and 129-149; these read LLTN…IVGI and VCVA…LWLI.

Belongs to the PRA1 family. In terms of assembly, interacts with YIP1 and the Rab GTPases SEC4, YPT1, YPT6, YPT10, YPT11, YPT31, YPT32 and YPT52.

It is found in the golgi apparatus membrane. The protein localises to the peroxisome membrane. The polypeptide is Prenylated Rab acceptor 1 (YIP3) (Saccharomyces cerevisiae (strain ATCC 204508 / S288c) (Baker's yeast)).